We begin with the raw amino-acid sequence, 142 residues long: Large ribosomal subunit protein uL23 (142 aa).

This sequence belongs to the universal ribosomal protein uL23 family.

Functionally, this protein binds to a specific region on the 26S rRNA. The protein is Large ribosomal subunit protein uL23 (RPL25) of Cyberlindnera jadinii (Torula yeast).